The sequence spans 92 residues: Putative membrane protein insertion efficiency factor (92 aa).

It belongs to the UPF0161 family.

The protein resides in the cell inner membrane. Could be involved in insertion of integral membrane proteins into the membrane. This chain is Putative membrane protein insertion efficiency factor, found in Synechococcus sp. (strain CC9902).